Reading from the N-terminus, the 171-residue chain is Lipoprotein signal peptidase (171 aa).

A run of 3 helical transmembrane segments spans residues glycine 7–phenylalanine 27, isoleucine 64–methionine 84, and threonine 88–isoleucine 108. Residues aspartate 118 and aspartate 136 contribute to the active site. A helical membrane pass occupies residues serine 128–leucine 148.

This sequence belongs to the peptidase A8 family.

Its subcellular location is the cell inner membrane. It carries out the reaction Release of signal peptides from bacterial membrane prolipoproteins. Hydrolyzes -Xaa-Yaa-Zaa-|-(S,diacylglyceryl)Cys-, in which Xaa is hydrophobic (preferably Leu), and Yaa (Ala or Ser) and Zaa (Gly or Ala) have small, neutral side chains.. It functions in the pathway protein modification; lipoprotein biosynthesis (signal peptide cleavage). Functionally, this protein specifically catalyzes the removal of signal peptides from prolipoproteins. This is Lipoprotein signal peptidase from Methylobacterium radiotolerans (strain ATCC 27329 / DSM 1819 / JCM 2831 / NBRC 15690 / NCIMB 10815 / 0-1).